A 276-amino-acid chain; its full sequence is Triple specificity protein phosphatase PtpB (276 aa).

Cys-160 acts as the Phosphocysteine intermediate in catalysis. The tract at residues 232–250 (LGVRAEYLAAARQTIDETY) is UIM-like region.

Belongs to the protein-tyrosine phosphatase family. In terms of assembly, interacts (via UIM-like region) with host ubiquitin; activating the phosphatidylinositol phosphate phosphatase activity.

It is found in the secreted. Its subcellular location is the host cytoplasm. The protein localises to the host cell membrane. The enzyme catalyses O-phospho-L-tyrosyl-[protein] + H2O = L-tyrosyl-[protein] + phosphate. The catalysed reaction is O-phospho-L-seryl-[protein] + H2O = L-seryl-[protein] + phosphate. It carries out the reaction O-phospho-L-threonyl-[protein] + H2O = L-threonyl-[protein] + phosphate. It catalyses the reaction 1,2-dioctanoyl-sn-glycero-3-phospho-(1-D-myo-inositol-3-phosphate) + H2O = 1,2-dioctanoyl-sn-glycero-3-phospho-(1D-myo-inositol) + phosphate. The enzyme catalyses 1,2-dioctanoyl-sn-glycero-3-phospho-(1-D-myo-inositol-4-phosphate) + H2O = 1,2-dioctanoyl-sn-glycero-3-phospho-(1D-myo-inositol) + phosphate. The catalysed reaction is 1,2-dioctanoyl-sn-glycero-3-phospho-(1D-myo-inositol-5-phosphate) + H2O = 1,2-dioctanoyl-sn-glycero-3-phospho-(1D-myo-inositol) + phosphate. With respect to regulation, binding to host ubiquitin is required to activate the phosphatidylinositol phosphate phosphatase activity. Phosphatase activity is inhibited by sodium orthovanadate, a specific inhibitor of tyrosine phosphatases, but not by okadaic acid, an inhibitor of serine/threonine phosphatases. Inhibition of the enzyme reduces mycobacterial survival in infected macrophages. Inhibitors also enhance killing efficacy by first-line antibiotics. Functionally, essential virulence factor that promotes mycobacterial survival within host macrophages. Acts as a phosphatase that possesses triple substrate specificity toward phosphotyrosine, phosphoserine/threonine and phosphoinositides. Supports mycobacteria survival during infection by modulating the normal host signaling pathways, attenuating the bactericidal immune responses and promoting the host cell survival. Inhibits host pyroptosis by disrupting the membrane localization of host gasdermin-D (GSDMD): acts by catalyzing dephosphorylation of phosphatidylinositol (4,5)-bisphosphate and phosphatidylinositol 4-phosphate, thereby inhibiting the membrane targeting of GSDMD and subsequent cytokine release and pyroptosis. Inhibits host inflammatory responses and apoptosis through impeding the NF-kappa-B and MAPK signal pathways and TP53/p53 expression in the macrophage. Blocks the IL6/IL-6 production by down-regulating ERK1/2, p38 and p65 activity. Prevents macrophage cell death by activating the Akt pathway and blocking caspase 3 activity. Reduces the expression of iNOS in activated macrophages and inhibits the generation of destroying reactive nitrogen intermediate NO. The polypeptide is Triple specificity protein phosphatase PtpB (Mycobacterium tuberculosis (strain ATCC 25618 / H37Rv)).